We begin with the raw amino-acid sequence, 422 residues long: Dihydroorotase (422 aa).

Positions 59 and 61 each coordinate Zn(2+). Substrate contacts are provided by residues 61-63 (HFR) and asparagine 93. Residues aspartate 150, histidine 177, and histidine 230 each contribute to the Zn(2+) site. A substrate-binding site is contributed by asparagine 276. Aspartate 303 is a binding site for Zn(2+). The active site involves aspartate 303. Histidine 307 contributes to the substrate binding site.

This sequence belongs to the metallo-dependent hydrolases superfamily. DHOase family. Class I DHOase subfamily. The cofactor is Zn(2+).

It catalyses the reaction (S)-dihydroorotate + H2O = N-carbamoyl-L-aspartate + H(+). It participates in pyrimidine metabolism; UMP biosynthesis via de novo pathway; (S)-dihydroorotate from bicarbonate: step 3/3. Catalyzes the reversible cyclization of carbamoyl aspartate to dihydroorotate. The sequence is that of Dihydroorotase from Streptococcus thermophilus (strain CNRZ 1066).